Here is a 596-residue protein sequence, read N- to C-terminus: Succinate dehydrogenase flavoprotein subunit (596 aa).

FAD is bound by residues 18-23, 41-56, and aspartate 225; these read GAGGAG and TKLFPTRSHTVAAQGG. Histidine 49 is modified (tele-8alpha-FAD histidine). The substrate site is built by histidine 246 and threonine 258. Arginine 290 functions as the Proton acceptor in the catalytic mechanism. Residue histidine 357 coordinates substrate. An FAD-binding site is contributed by glutamate 391. Arginine 402 serves as a coordination point for substrate. Residue 407 to 408 participates in FAD binding; the sequence is SL.

This sequence belongs to the FAD-dependent oxidoreductase 2 family. FRD/SDH subfamily. In terms of assembly, part of an enzyme complex containing four subunits: a flavoprotein, an iron-sulfur, cytochrome b-556, and a hydrophobic anchor protein. It depends on FAD as a cofactor.

The protein localises to the cell inner membrane. It catalyses the reaction a quinone + succinate = fumarate + a quinol. The protein operates within carbohydrate metabolism; tricarboxylic acid cycle; fumarate from succinate (bacterial route): step 1/1. The chain is Succinate dehydrogenase flavoprotein subunit (sdhA) from Rickettsia felis (strain ATCC VR-1525 / URRWXCal2) (Rickettsia azadi).